We begin with the raw amino-acid sequence, 89 residues long: Putative regulatory protein Nther_1328 (89 aa).

Belongs to the RemA family.

The protein is Putative regulatory protein Nther_1328 of Natranaerobius thermophilus (strain ATCC BAA-1301 / DSM 18059 / JW/NM-WN-LF).